The following is a 160-amino-acid chain: Probable chemoreceptor glutamine deamidase CheD 2 (160 aa).

This sequence belongs to the CheD family.

The catalysed reaction is L-glutaminyl-[protein] + H2O = L-glutamyl-[protein] + NH4(+). Probably deamidates glutamine residues to glutamate on methyl-accepting chemotaxis receptors (MCPs), playing an important role in chemotaxis. The sequence is that of Probable chemoreceptor glutamine deamidase CheD 2 from Geobacter sulfurreducens (strain ATCC 51573 / DSM 12127 / PCA).